A 337-amino-acid chain; its full sequence is DNA-directed RNA polymerase subunit alpha (337 aa).

The segment at 1-233 (MVREEVVGST…DLFIPFLHAE (233 aa)) is alpha N-terminal domain (alpha-NTD). The tract at residues 265-337 (KEIALKCIFI…FAIDLPKNKF (73 aa)) is alpha C-terminal domain (alpha-CTD).

Belongs to the RNA polymerase alpha chain family. In terms of assembly, in plastids the minimal PEP RNA polymerase catalytic core is composed of four subunits: alpha, beta, beta', and beta''. When a (nuclear-encoded) sigma factor is associated with the core the holoenzyme is formed, which can initiate transcription.

The protein resides in the plastid. It localises to the chloroplast. It catalyses the reaction RNA(n) + a ribonucleoside 5'-triphosphate = RNA(n+1) + diphosphate. DNA-dependent RNA polymerase catalyzes the transcription of DNA into RNA using the four ribonucleoside triphosphates as substrates. The sequence is that of DNA-directed RNA polymerase subunit alpha from Acorus gramineus (Dwarf sweet flag).